The sequence spans 357 residues: F-box only protein 25 (357 aa).

An interaction with beta-actin region spans residues 1 to 83; that stretch reads MPFLGQDWRS…DTAAHSFYRE (83 aa). The F-box domain occupies 225–273; it reads LTLSDLPLHMLNNILYRFSDGWDIVTLGQVTPTLYMLSEDRRLWKRLCQ.

Part of a SCF (SKP1-cullin-F-box) protein ligase complex consisting of FBXO25, SKP1, CUL1 and RBX1. Interacts directly with SKP1 and CUL1. Interacts (via C-terminus) with beta-actin (via N-terminus). In terms of tissue distribution, expressed in all tissues tested, except striated muscle (at protein level). Expressed predominantly in the cerebral cortex, the hippocampus and the Purkinje cell layer of the brain. Intestine and kidney show also significant levels.

The protein localises to the nucleus. The protein operates within protein modification; protein ubiquitination. Functionally, substrate-recognition component of the SCF (SKP1-CUL1-F-box protein)-type E3 ubiquitin ligase complex. May play a role in accumulation of expanded polyglutamine (polyQ) protein huntingtin (HTT). This Mus musculus (Mouse) protein is F-box only protein 25 (Fbxo25).